We begin with the raw amino-acid sequence, 1382 residues long: Insulin receptor (1382 aa).

Residues 1–27 form the signal peptide; the sequence is MATGGRRGAAAAPLLVAVAALLLGAAG. 2 consecutive stretches face the extracellular side: residues 28–758 and 763–956; these read HLYP…PRPS and SLGD…NIAK. Cysteine 35 and cysteine 53 are disulfide-bonded. 4 N-linked (GlcNAc...) asparagine glycosylation sites follow: asparagine 43, asparagine 52, asparagine 105, and asparagine 138. Disulfide bonds link cysteine 153/cysteine 182, cysteine 186/cysteine 209, cysteine 196/cysteine 215, cysteine 219/cysteine 228, cysteine 223/cysteine 234, cysteine 235/cysteine 243, cysteine 239/cysteine 252, cysteine 255/cysteine 264, and cysteine 268/cysteine 280. N-linked (GlcNAc...) asparagine glycosylation occurs at asparagine 242. An N-linked (GlcNAc...) asparagine glycan is attached at asparagine 282. 5 disulfide bridges follow: cysteine 286–cysteine 311, cysteine 293–cysteine 301, cysteine 315–cysteine 328, cysteine 331–cysteine 335, and cysteine 339–cysteine 360. N-linked (GlcNAc...) asparagine glycosylation occurs at asparagine 322. A glycan (N-linked (GlcNAc...) asparagine) is linked at asparagine 364. Serine 400 is subject to Phosphoserine. Tyrosine 401 bears the Phosphotyrosine mark. The residue at position 407 (serine 407) is a Phosphoserine. N-linked (GlcNAc...) asparagine glycosylation is found at asparagine 424 and asparagine 445. Cysteine 462 and cysteine 495 form a disulfide bridge. N-linked (GlcNAc...) asparagine glycans are attached at residues asparagine 541, asparagine 633, asparagine 651, and asparagine 698. The Fibronectin type-III 1 domain occupies 624–726; that stretch reads VPLDPISVSN…SQILKELEES (103 aa). 2 cysteine pairs are disulfide-bonded: cysteine 674–cysteine 899 and cysteine 825–cysteine 834. Residues 686–708 form a disordered region; that stretch reads SPPFESEDSQKHNQSEYEDSAGE. An insulin-binding region spans residues 733-741; the sequence is EDYLHNVVF. The disordered stretch occupies residues 746 to 766; it reads TSSGTGAEDPRPSRKRRSLGD. Fibronectin type-III domains follow at residues 757–842 and 853–947; these read PSRK…YVSA and IVGP…VTDY. N-linked (GlcNAc...) asparagine glycans are attached at residues asparagine 769 and asparagine 782. 2 N-linked (GlcNAc...) asparagine glycosylation sites follow: asparagine 920 and asparagine 933. Residues 957–979 form a helical membrane-spanning segment; sequence IIIGPLIFVFLFSVVIGSIYLFL. Residues 980–1382 lie on the Cytoplasmic side of the membrane; it reads RKRQPDGPLG…ILTLPRSNPS (403 aa). Residues tyrosine 992, tyrosine 999, and tyrosine 1011 each carry the phosphotyrosine; by autocatalysis modification. Position 999 (tyrosine 999) is a region of interest, important for interaction with IRS1, SHC1 and STAT5B. A Protein kinase domain is found at 1023-1298; the sequence is ITLLRELGQG…LLKDDLHPSF (276 aa). Serine 1033 and lysine 1057 together coordinate ATP. Residue lysine 1079 forms a Glycyl lysine isopeptide (Lys-Gly) (interchain with G-Cter in ubiquitin) linkage. Cysteine 1083 carries the S-nitrosocysteine modification. 1104–1110 lines the ATP pocket; that stretch reads ELMAHGD. The active-site Proton donor/acceptor is aspartate 1159. ATP contacts are provided by residues 1163-1164 and aspartate 1177; that span reads RN. Phosphotyrosine; by autocatalysis occurs at positions 1185, 1189, 1190, 1355, and 1361. The interval 1360-1382 is disordered; it reads PYTHMNGGKKNGRILTLPRSNPS. A PIK3R1-binding region spans residues 1361–1364; it reads YTHM.

Belongs to the protein kinase superfamily. Tyr protein kinase family. Insulin receptor subfamily. As to quaternary structure, tetramer of 2 alpha and 2 beta chains linked by disulfide bonds. The alpha chains carry the insulin-binding regions, while the beta chains carry the kinase domain. Forms a hybrid receptor with IGF1R, the hybrid is a tetramer consisting of 1 alpha chain and 1 beta chain of INSR and 1 alpha chain and 1 beta chain of IGF1R. Interacts with SORBS1 but dissociates from it following insulin stimulation. Binds SH2B2. Activated form of INSR interacts (via Tyr-999) with the PTB/PID domains of IRS1 and SHC1. The sequences surrounding the phosphorylated NPXY motif contribute differentially to either IRS1 or SHC1 recognition. Interacts (via tyrosines in the C-terminus) with IRS2 (via PTB domain and 591-786 AA); the 591-786 would be the primary anchor of IRS2 to INSR while the PTB domain would have a stabilizing action on the interaction with INSR. Interacts with the SH2 domains of the 85 kDa regulatory subunit of PI3K (PIK3R1) in vitro, when autophosphorylated on tyrosine residues. Interacts with SOCS7. Interacts (via the phosphorylated Tyr-999), with SOCS3. Interacts (via the phosphorylated Tyr-1185, Tyr-1189, Tyr-1190) with SOCS1. Interacts with CAV2 (tyrosine-phosphorylated form); the interaction is increased with 'Tyr-27'phosphorylation of CAV2. Interacts with ARRB2. Interacts with GRB10; this interaction blocks the association between IRS1/IRS2 and INSR, significantly reduces insulin-stimulated tyrosine phosphorylation of IRS1 and IRS2 and thus decreases insulin signaling. Interacts with GRB7. Interacts with PDPK1. Interacts (via Tyr-1190) with GRB14 (via BPS domain); this interaction protects the tyrosines in the activation loop from dephosphorylation, but promotes dephosphorylation of Tyr-999, this results in decreased interaction with, and phosphorylation of, IRS1. Interacts (via subunit alpha) with ENPP1 (via 485-599 AA); this interaction blocks autophosphorylation. Interacts with PTPRE; this interaction is dependent of Tyr-1185, Tyr-1189 and Tyr-1190 of the INSR. Interacts with STAT5B (via SH2 domain). Interacts with PTPRF. Interacts with ATIC; ATIC together with PRKAA2/AMPK2 and HACD3/PTPLAD1 is proposed to be part of a signaling netwok regulating INSR autophosphorylation and endocytosis. Interacts with the cone snail venom insulin Con-Ins G1. Interacts with the insulin receptor SORL1; this interaction strongly increases its surface exposure, hence strengthens insulin signal reception. Interacts (tyrosine phosphorylated) with CCDC88A/GIV (via SH2-like region); binding requires autophosphorylation of the INSR C-terminal region. Interacts with GNAI3; the interaction is probably mediated by CCDC88A/GIV. Interacts with LMBRD1. Interacts (in response to insulin stimulation) with NCK1; this interaction may recruit PTPN1 to mediate INSR dephosphorylation. Interacts with CD248; this interaction diminishes INSR autophosphorylation. In terms of processing, after being transported from the endoplasmic reticulum to the Golgi apparatus, the single glycosylated precursor is further glycosylated and then cleaved, followed by its transport to the plasma membrane. Post-translationally, autophosphorylated on tyrosine residues in response to insulin. Phosphorylation of Tyr-999 is required for binding to IRS1, SHC1 and STAT5B. Dephosphorylated by PTPRE at Tyr-999, Tyr-1185, Tyr-1189 and Tyr-1190. May also be phosphorylated at Tyr-1185 and Tyr-1190 by mTORC2. Dephosphorylated by PTPRF and PTPN1. Dephosphorylated by PTPN2; down-regulates insulin-induced signaling. Dephosphorylation at Tyr-1189 and Tyr-1190 requires the SH2/SH3 adapter protein NCK1, probably to recruit its interaction partner PTPN1. S-nitrosylation at Cys-1083 by BLVRB inhibits the receptor tyrosine kinase, thereby inhibiting insulin signaling. In terms of processing, ubiquitinated by MARCHF1; leading to degradation thereby reducing surface INSR expression. In terms of tissue distribution, isoform Long and isoform Short are predominantly expressed in tissue targets of insulin metabolic effects: liver, adipose tissue and skeletal muscle but are also expressed in the peripheral nerve, kidney, pulmonary alveoli, pancreatic acini, placenta vascular endothelium, fibroblasts, monocytes, granulocytes, erythrocytes and skin. Isoform Short is preferentially expressed in fetal cells such as fetal fibroblasts, muscle, liver and kidney. Found as a hybrid receptor with IGF1R in muscle, heart, kidney, adipose tissue, skeletal muscle, hepatoma, fibroblasts, spleen and placenta (at protein level). Overexpressed in several tumors, including breast, colon, lung, ovary, and thyroid carcinomas.

It localises to the cell membrane. Its subcellular location is the late endosome. It is found in the lysosome. The enzyme catalyses L-tyrosyl-[protein] + ATP = O-phospho-L-tyrosyl-[protein] + ADP + H(+). With respect to regulation, activated in response to insulin. Autophosphorylation activates the kinase activity. PTPN1, PTPRE and PTPRF dephosphorylate important tyrosine residues, thereby reducing INSR activity. Inhibited by ENPP1. GRB10 and GRB14 inhibit the catalytic activity of the INSR, they block access of substrates to the activated receptor. SOCS1 and SOCS3 act as negative regulators of INSR activity, they bind to the activated INRS and interfere with the phosphorylation of INSR substrates. Receptor tyrosine kinase which mediates the pleiotropic actions of insulin. Binding of insulin leads to phosphorylation of several intracellular substrates, including, insulin receptor substrates (IRS1, 2, 3, 4), SHC, GAB1, CBL and other signaling intermediates. Each of these phosphorylated proteins serve as docking proteins for other signaling proteins that contain Src-homology-2 domains (SH2 domain) that specifically recognize different phosphotyrosine residues, including the p85 regulatory subunit of PI3K and SHP2. Phosphorylation of IRSs proteins lead to the activation of two main signaling pathways: the PI3K-AKT/PKB pathway, which is responsible for most of the metabolic actions of insulin, and the Ras-MAPK pathway, which regulates expression of some genes and cooperates with the PI3K pathway to control cell growth and differentiation. Binding of the SH2 domains of PI3K to phosphotyrosines on IRS1 leads to the activation of PI3K and the generation of phosphatidylinositol-(3, 4, 5)-triphosphate (PIP3), a lipid second messenger, which activates several PIP3-dependent serine/threonine kinases, such as PDPK1 and subsequently AKT/PKB. The net effect of this pathway is to produce a translocation of the glucose transporter SLC2A4/GLUT4 from cytoplasmic vesicles to the cell membrane to facilitate glucose transport. Moreover, upon insulin stimulation, activated AKT/PKB is responsible for: anti-apoptotic effect of insulin by inducing phosphorylation of BAD; regulates the expression of gluconeogenic and lipogenic enzymes by controlling the activity of the winged helix or forkhead (FOX) class of transcription factors. Another pathway regulated by PI3K-AKT/PKB activation is mTORC1 signaling pathway which regulates cell growth and metabolism and integrates signals from insulin. AKT mediates insulin-stimulated protein synthesis by phosphorylating TSC2 thereby activating mTORC1 pathway. The Ras/RAF/MAP2K/MAPK pathway is mainly involved in mediating cell growth, survival and cellular differentiation of insulin. Phosphorylated IRS1 recruits GRB2/SOS complex, which triggers the activation of the Ras/RAF/MAP2K/MAPK pathway. In addition to binding insulin, the insulin receptor can bind insulin-like growth factors (IGFI and IGFII). Isoform Short has a higher affinity for IGFII binding. When present in a hybrid receptor with IGF1R, binds IGF1. PubMed:12138094 shows that hybrid receptors composed of IGF1R and INSR isoform Long are activated with a high affinity by IGF1, with low affinity by IGF2 and not significantly activated by insulin, and that hybrid receptors composed of IGF1R and INSR isoform Short are activated by IGF1, IGF2 and insulin. In contrast, PubMed:16831875 shows that hybrid receptors composed of IGF1R and INSR isoform Long and hybrid receptors composed of IGF1R and INSR isoform Short have similar binding characteristics, both bind IGF1 and have a low affinity for insulin. In adipocytes, inhibits lipolysis. This is Insulin receptor (INSR) from Homo sapiens (Human).